Consider the following 215-residue polypeptide: Cytochrome b6 (215 aa).

The chain crosses the membrane as a helical span at residues 32–52 (IFYCLGGITFTLFLVQVATGF). Position 35 (cysteine 35) interacts with heme c. Residues histidine 86 and histidine 100 each coordinate heme b. A run of 3 helical transmembrane segments spans residues 90–110 (ASMM…TGGF), 116–136 (LTWI…VTGY), and 186–206 (LHTF…FLMI). The heme b site is built by histidine 187 and histidine 202.

Belongs to the cytochrome b family. PetB subfamily. As to quaternary structure, the 4 large subunits of the cytochrome b6-f complex are cytochrome b6, subunit IV (17 kDa polypeptide, PetD), cytochrome f and the Rieske protein, while the 4 small subunits are PetG, PetL, PetM and PetN. The complex functions as a dimer. Requires heme b as cofactor. Heme c serves as cofactor.

It is found in the plastid. Its subcellular location is the chloroplast thylakoid membrane. Its function is as follows. Component of the cytochrome b6-f complex, which mediates electron transfer between photosystem II (PSII) and photosystem I (PSI), cyclic electron flow around PSI, and state transitions. This Tupiella akineta (Green alga) protein is Cytochrome b6.